Reading from the N-terminus, the 196-residue chain is Imidazoleglycerol-phosphate dehydratase (196 aa).

This sequence belongs to the imidazoleglycerol-phosphate dehydratase family.

Its subcellular location is the cytoplasm. The catalysed reaction is D-erythro-1-(imidazol-4-yl)glycerol 3-phosphate = 3-(imidazol-4-yl)-2-oxopropyl phosphate + H2O. It participates in amino-acid biosynthesis; L-histidine biosynthesis; L-histidine from 5-phospho-alpha-D-ribose 1-diphosphate: step 6/9. This Dehalococcoides mccartyi (strain CBDB1) protein is Imidazoleglycerol-phosphate dehydratase.